The primary structure comprises 352 residues: UDP-N-acetylglucosamine--N-acetylmuramyl-(pentapeptide) pyrophosphoryl-undecaprenol N-acetylglucosamine transferase (352 aa).

2 residues coordinate UDP-N-acetyl-alpha-D-glucosamine: Ser-195 and Gln-287.

This sequence belongs to the glycosyltransferase 28 family. MurG subfamily.

The protein resides in the cell membrane. The enzyme catalyses Mur2Ac(oyl-L-Ala-gamma-D-Glu-L-Lys-D-Ala-D-Ala)-di-trans,octa-cis-undecaprenyl diphosphate + UDP-N-acetyl-alpha-D-glucosamine = beta-D-GlcNAc-(1-&gt;4)-Mur2Ac(oyl-L-Ala-gamma-D-Glu-L-Lys-D-Ala-D-Ala)-di-trans,octa-cis-undecaprenyl diphosphate + UDP + H(+). The protein operates within cell wall biogenesis; peptidoglycan biosynthesis. Functionally, cell wall formation. Catalyzes the transfer of a GlcNAc subunit on undecaprenyl-pyrophosphoryl-MurNAc-pentapeptide (lipid intermediate I) to form undecaprenyl-pyrophosphoryl-MurNAc-(pentapeptide)GlcNAc (lipid intermediate II). This Streptococcus pneumoniae (strain ATCC BAA-255 / R6) protein is UDP-N-acetylglucosamine--N-acetylmuramyl-(pentapeptide) pyrophosphoryl-undecaprenol N-acetylglucosamine transferase.